We begin with the raw amino-acid sequence, 307 residues long: Undecaprenyl-diphosphatase 2 (307 aa).

The next 8 membrane-spanning stretches (helical) occupy residues 19-41 (GVTE…IIGF), 56-76 (IHMF…VLYW), 117-137 (FKFW…GLPF), 144-164 (LLFF…WMIF), 208-228 (IIGA…SFFL), 229-249 (AIPM…VVLS), 251-271 (VQIL…LVVV), and 285-305 (IFAV…FTKV).

The protein belongs to the UppP family.

It localises to the cell membrane. It carries out the reaction di-trans,octa-cis-undecaprenyl diphosphate + H2O = di-trans,octa-cis-undecaprenyl phosphate + phosphate + H(+). Functionally, catalyzes the dephosphorylation of undecaprenyl diphosphate (UPP). Confers resistance to bacitracin. The polypeptide is Undecaprenyl-diphosphatase 2 (Clostridium acetobutylicum (strain ATCC 824 / DSM 792 / JCM 1419 / IAM 19013 / LMG 5710 / NBRC 13948 / NRRL B-527 / VKM B-1787 / 2291 / W)).